A 277-amino-acid chain; its full sequence is MNRLFVVNKPIFRTSNGYMGYVKRKYNTKKVGFSGTLDPFATGCLIVATGQYTKLFQYLNKTPKSYKATLWLGANSPSLDIEKVDSIREVAPFSQKTIEEVLQSFKGELTYYPPRFSAKKVNGKRAYELAREGKEIDLKQITSTIYEITLINYNHPFIHFEATVSEGTYIRSLGALIADRLRVDATLSSLHRIHEGQFHYENEKALDPFTHLAIPSNIYTGDEAYLELGKKLSVDYFEAKENGIYLIETSNFFSIIEIVGEAVKYRFNRIPKFEDTP.

Asp38 (nucleophile) is an active-site residue.

Belongs to the pseudouridine synthase TruB family. Type 1 subfamily.

It carries out the reaction uridine(55) in tRNA = pseudouridine(55) in tRNA. Functionally, responsible for synthesis of pseudouridine from uracil-55 in the psi GC loop of transfer RNAs. The protein is tRNA pseudouridine synthase B of Sulfurovum sp. (strain NBC37-1).